The sequence spans 1167 residues: White collar 1 protein (1167 aa).

Disordered regions lie at residues 1 to 91 and 307 to 355; these read MNNN…MSGG and STPA…GASQ. Residues 21 to 57 show a composition bias toward low complexity; the sequence is QHQQQQQQQQQQQQQQQQQQQQQQQQQQQQHQHQQQQ. Polar residues-rich tracts occupy residues 70–91 and 307–325; these read TPPT…MSGG and STPA…TQTI. Residues 335–348 show a composition bias toward low complexity; the sequence is VTNAPTPAPFTSTP. The region spanning 381 to 452 is the PAS 1 domain; that stretch reads KLKLGAVDMS…KREFVENNAV (72 aa). At cysteine 428 the chain carries S-4a-FMN cysteine. Positions 469-508 constitute a PAC 1 domain; it reads LINYRKGGKPFLNLLTMIPIPWDTEEIRYFIGFQIDLVEC. A PAS 2 domain is found at 574 to 644; it reads KQSWDKMLLE…RELKEAQQHT (71 aa). In terms of domain architecture, PAC 2 spans 650–691; it reads FRIRRKNSGYTWFESHGTLFNEQGKGRKCIILVGRKRPVFAL. The region spanning 693 to 763 is the PAS 3 domain; it reads RKDLELNGGI…RTIEKARKGK (71 aa). Over residues 849-861 the composition is skewed to low complexity; it reads MSKSGSSDSTGAM. Disordered stretches follow at residues 849-872, 918-952, 966-1047, and 1060-1167; these read MSKS…GPGQ, KKKR…PSGN, QTGR…TGST, and VNAL…GLSV. The segment at 934–959 adopts a GATA-type zinc-finger fold; the sequence is CANCHTRNTPEWRRGPSGNRDLCNSC. The span at 968–977 shows a compositional bias: polar residues; the sequence is GRVSPRTSSR. The segment covering 986 to 995 has biased composition (low complexity); it reads KKSNSPSHSS. Polar residues predominate over residues 1004 to 1033; the sequence is DSPSTTTATKNSPSLRGSSTTAPGTITTDS. Low complexity-rich tracts occupy residues 1036 to 1047 and 1104 to 1128; these read AVASSASGTGST and QHQQ…QQHQ.

In terms of assembly, heterodimer of wc-1 and wc-2. FMN binds covalently to cysteine after exposure to blue light and is reversed in the dark.

The protein resides in the nucleus. In terms of biological role, may function as a transcription factor involved in light regulation. Binds and affects blue light regulation of the al-3 gene. Wc-1 and wc-2 proteins interact via homologous PAS domains, bind to promoters of light regulated genes such as frq, and activate transcription. The polypeptide is White collar 1 protein (wc-1) (Neurospora crassa (strain ATCC 24698 / 74-OR23-1A / CBS 708.71 / DSM 1257 / FGSC 987)).